Reading from the N-terminus, the 388-residue chain is MASATLLKSSFLPKKSEWGATRQAAAPKPVTVSMVVRAGAYDDELVKTAKTIASPGRGILAMDESNATCGKRLASIGLENTEANRQAYRTLLVTAPGLGQYISGAILFEETLYQSTVDGKKIVDILTEQKIVPGIKVDKGLVPLAGSNNESWCQGLDGLASREAAYYQQGARFAKWRTVVSIPNGPSELAVKEAAWGLARYAAISQDNGLVPIVEPEILLDGEHGIDRTFEVAQKVWAETFFYMAENNVMFEGILLKPSMVTPGAECKDRATPEQVSDYTLKLLHRRIPPAVPGIMFLSGGQSEVEATQNLNAMNQGPNPWHVSFSYARALQNTCLKTWGGQPENVKAAQDALLLRAKANSLAQLGKYTSDGEAAEAKEGMFVKNYVY.

A chloroplast-targeting transit peptide spans 1–38 (MASATLLKSSFLPKKSEWGATRQAAAPKPVTVSMVVRA). A substrate-binding site is contributed by Arg-72. The active-site Proton acceptor is the Glu-215. Residue Lys-257 is the Schiff-base intermediate with dihydroxyacetone-P of the active site. Substrate is bound by residues 299–301 (SGG) and Arg-329.

The protein belongs to the class I fructose-bisphosphate aldolase family. Homotetramer. In terms of tissue distribution, expressed in leaf mesophyll cells.

Its subcellular location is the plastid. The protein localises to the chloroplast. It localises to the plastoglobule. The catalysed reaction is beta-D-fructose 1,6-bisphosphate = D-glyceraldehyde 3-phosphate + dihydroxyacetone phosphate. Its pathway is carbohydrate degradation; glycolysis; D-glyceraldehyde 3-phosphate and glycerone phosphate from D-glucose: step 4/4. Functionally, plays a key role in glycolysis and gluconeogenesis. The polypeptide is Fructose-bisphosphate aldolase, chloroplastic (Oryza sativa subsp. japonica (Rice)).